The following is a 185-amino-acid chain: Large ribosomal subunit protein uL5 (185 aa).

This sequence belongs to the universal ribosomal protein uL5 family. In terms of assembly, part of the 50S ribosomal subunit; part of the 5S rRNA/L5/L18/L25 subcomplex. Contacts the 5S rRNA and the P site tRNA. Forms a bridge to the 30S subunit in the 70S ribosome.

Its function is as follows. This is one of the proteins that bind and probably mediate the attachment of the 5S RNA into the large ribosomal subunit, where it forms part of the central protuberance. In the 70S ribosome it contacts protein S13 of the 30S subunit (bridge B1b), connecting the 2 subunits; this bridge is implicated in subunit movement. Contacts the P site tRNA; the 5S rRNA and some of its associated proteins might help stabilize positioning of ribosome-bound tRNAs. This is Large ribosomal subunit protein uL5 from Rhizobium etli (strain CIAT 652).